A 244-amino-acid polypeptide reads, in one-letter code: Phosphoadenosine 5'-phosphosulfate reductase (244 aa).

Cys-239 acts as the Nucleophile; cysteine thiosulfonate intermediate in catalysis.

It belongs to the PAPS reductase family. CysH subfamily.

Its subcellular location is the cytoplasm. It catalyses the reaction [thioredoxin]-disulfide + sulfite + adenosine 3',5'-bisphosphate + 2 H(+) = [thioredoxin]-dithiol + 3'-phosphoadenylyl sulfate. It functions in the pathway sulfur metabolism; hydrogen sulfide biosynthesis; sulfite from sulfate: step 3/3. Its function is as follows. Catalyzes the formation of sulfite from phosphoadenosine 5'-phosphosulfate (PAPS) using thioredoxin as an electron donor. The protein is Phosphoadenosine 5'-phosphosulfate reductase of Escherichia coli O157:H7.